A 1114-amino-acid polypeptide reads, in one-letter code: Transcriptional repressor NF-X1 (1114 aa).

The interaction with PABPC1 and PABC4 stretch occupies residues Gly9 to Lys26. Disordered stretches follow at residues Phe20–Pro220, Gln232–Ser287, and Lys299–Gly325. Phosphoserine occurs at positions 50, 81, 92, 126, 130, and 147. Composition is skewed to polar residues over residues Ser72–Trp103 and Leu121–Asn142. Basic and acidic residues-rich tracts occupy residues Pro143–Val156, Leu185–Thr202, Gln232–Arg248, and Val304–Asp315. The residue at position 320 (Ser320) is a Phosphoserine. The RING-type; atypical zinc-finger motif lies at Cys352–Gln403. NF-X1-type zinc fingers lie at residues Cys447 to Ala465, Cys500 to Ile519, Cys561 to Arg580, Cys626 to Arg649, Cys688 to Leu707, Cys715 to Gln734, Cys826 to Gln848, and Cys857 to Ala878. Residues Leu988–Arg1056 form the R3H domain. The disordered stretch occupies residues Glu1071–Ser1095.

Belongs to the NFX1 family. As to quaternary structure, interacts with PABPC1 and PABPC4. Ubiquitously expressed, with highest levels in thymus.

It is found in the nucleus. Functionally, binds to the X-box motif of MHC class II genes and represses their expression. May play an important role in regulating the duration of an inflammatory response by limiting the period in which MHC class II molecules are induced by interferon-gamma. Together with PABPC1 or PABPC4, acts as a coactivator for TERT expression. Mediates E2-dependent ubiquitination. In Mus musculus (Mouse), this protein is Transcriptional repressor NF-X1 (Nfx1).